We begin with the raw amino-acid sequence, 1159 residues long: MLDFLAENNLCGQAILRIVSCGNAIIAELLRLSEFIPAVFRLKDRADQQKYGDIIFDFSYFKGPELWESKLDAKPELQDLDEEFRENNIEIVTRFYLAFQSVHKYIVDLNRYLDDLNEGVYIQQTLETVLLNEDGKQLLCEALYLYGVMLLVIDQKIEGEVRERMLVSYYRYSAARSSADSNMDDICKLLRSTGYSSQPGARRPPNYPESYFQRVPINESFISMVIGRLRSDDIYNQVSAYPLPEHRSTALANQAAMLYVILYFEPSILHTHQAKMREIVDKYFPDNWVISIYMGITVNLVDAWEPYKAAKTALNNTLDLSNVREQASRYATVSERVHAQVQQFLKEGYLREEMVLDNIPKLLNCLRDCNVAIRWLMLHTADSACDPNNKRLRQIKDQILTDSRYNPRILFQLLLDTAQFEFILKEMFKQMLSEKQTKWEHYKKEGSERMTELADVFSGVKPLTRVEKNENLQAWFREISKQILSLNYDDSTAAGRKTVQLIQALEEVQEFHQLESNLQVCQFLADTRKFLHQMIRTINIKEEVLITMQIVGDLSFAWQLIDSFTSIMQESIRVNPSMVTKLRATFLKLASALDLPLLRINQANSPDLLSVSQYYSGELVSYVRKVLQIIPESMFTSLLKIIKLQTHDIIEVPTRLDKDKLRDYAQLGPRYEVAKLTHAISIFTEGILMMKTTLVGIIKVDPKQLLEDGIRKELVKRVAFALHRGLIFNPRAKPSELMPKLKELGATMDGFHRSFEYIQDYVNIYGLKIWQEEVSRIINYNVEQECNNFLRTKIQDWQSMYQSTHIPIPKFTPVDESVTFIGRLCREILRITDPKMTCHIDQLNTWYDMKTHQEVTSSRLFSEIQTTLGTFGLNGLDRLLCFMIVKELQNFLSMFQKIILRDRTVQDTLKTLMNAVSPLKSIVANSNKIYFSAIAKTQKIWTAYLEAIMKVGQMQILRQQIANELNYSCRFDSKHLAAALENLNKALLADIEAHYQDPSLPYPKEDNTLLYEITAYLEAAGIHNPLNKIYITTKRLPYFPIVNFLFLIAQLPKLQYNKNLGMVCRKPTDPVDWPPLVLGLLTLLKQFHSRYTEQFLALIGQFICSTVEQCTSQKIPEIPADVVGALLFLEDYARYTKLPRRVAEAHVPNFIFDEFRTVL.

S917 carries the post-translational modification Phosphoserine.

Belongs to the strumpellin family. As to quaternary structure, component of the WASH core complex also described as WASH regulatory complex (SHRC) composed of WASH (WASHC1, WASH2P or WASH3P), WASHC2 (WASHC2A or WASHC2C), WASHC3, WASHC4 and WASHC5. The WASH core complex associates via WASHC2 with the F-actin-capping protein dimer (formed by CAPZA1, CAPZA2 or CAPZA3 and CAPZB) in a transient or substoichiometric manner which was initially described as WASH complex. Interacts with VCP, PI4K2A.

It localises to the cytoplasm. It is found in the cytosol. Its subcellular location is the endoplasmic reticulum. The protein localises to the early endosome. Acts as a component of the WASH core complex that functions as a nucleation-promoting factor (NPF) at the surface of endosomes, where it recruits and activates the Arp2/3 complex to induce actin polymerization, playing a key role in the fission of tubules that serve as transport intermediates during endosome sorting. May be involved in axonal outgrowth. Involved in cellular localization of ADRB2. Involved in cellular trafficking of BLOC-1 complex cargos such as ATP7A and VAMP7. This is WASH complex subunit 5 from Pongo abelii (Sumatran orangutan).